The primary structure comprises 173 residues: DASH complex subunit SPC19 (173 aa).

The protein belongs to the DASH complex SPC19 family. As to quaternary structure, component of the DASH complex consisting of ASK1, DAD1, DAD2, DAD3, DAD4, DAM1, DUO1, HSK3, SPC19 and SPC34, with a stoichiometry of one copy of each subunit per complex. Multiple DASH complexes oligomerize to form a ring that encircles spindle microtubules and organizes the rod-like NDC80 complexes of the outer kinetochore. DASH complex oligomerization strengthens microtubule attachments. On cytoplasmic microtubules, DASH complexes appear to form patches instead of rings.

The protein localises to the nucleus. It localises to the cytoplasm. It is found in the cytoskeleton. The protein resides in the spindle. Its subcellular location is the chromosome. The protein localises to the centromere. It localises to the kinetochore. Its function is as follows. Component of the DASH complex that connects microtubules with kinetochores and couples microtubule depolymerisation to chromosome movement; it is involved in retrieving kinetochores to the spindle poles before their re-orientation on the spindle in early mitosis and allows microtubule depolymerization to pull chromosomes apart and resist detachment during anaphase. Kinetochores, consisting of a centromere-associated inner segment and a microtubule-contacting outer segment, play a crucial role in chromosome segregation by mediating the physical connection between centromeric DNA and microtubules. Kinetochores also serve as an input point for the spindle assembly checkpoint, which delays anaphase until all chromosomes have bioriented on the mitotic spindle. The chain is DASH complex subunit SPC19 from Chaetomium thermophilum (strain DSM 1495 / CBS 144.50 / IMI 039719) (Thermochaetoides thermophila).